We begin with the raw amino-acid sequence, 182 residues long: ATP-dependent protease subunit HslV (182 aa).

Thr-12 is a catalytic residue. Positions 167, 170, and 173 each coordinate Na(+).

Belongs to the peptidase T1B family. HslV subfamily. A double ring-shaped homohexamer of HslV is capped on each side by a ring-shaped HslU homohexamer. The assembly of the HslU/HslV complex is dependent on binding of ATP.

The protein localises to the cytoplasm. It catalyses the reaction ATP-dependent cleavage of peptide bonds with broad specificity.. With respect to regulation, allosterically activated by HslU binding. Protease subunit of a proteasome-like degradation complex believed to be a general protein degrading machinery. This Chlorobium phaeobacteroides (strain BS1) protein is ATP-dependent protease subunit HslV.